The sequence spans 412 residues: [Pyruvate dehydrogenase (acetyl-transferring)] kinase isozyme 4, mitochondrial (412 aa).

The Histidine kinase domain occupies 138–368; sequence IIEYKDSCTV…DAIIYLKALS (231 aa). ATP-binding positions include 254–261, D293, 312–313, and 329–334; these read ELFKNAMR, ST, and GFGYGL.

It belongs to the PDK/BCKDK protein kinase family. In terms of assembly, homodimer. Interacts with the pyruvate dehydrogenase complex subunit DLAT, and is part of the multimeric pyruvate dehydrogenase complex that contains multiple copies of pyruvate dehydrogenase (E1), dihydrolipoamide acetyltransferase (DLAT, E2) and lipoamide dehydrogenase (DLD, E3). Detected in heart, white adipose tissue and muscle.

Its subcellular location is the mitochondrion matrix. The enzyme catalyses L-seryl-[pyruvate dehydrogenase E1 alpha subunit] + ATP = O-phospho-L-seryl-[pyruvate dehydrogenase E1 alpha subunit] + ADP + H(+). Functionally, kinase that plays a key role in regulation of glucose and fatty acid metabolism and homeostasis via phosphorylation of the pyruvate dehydrogenase subunits PDHA1 and PDHA2. This inhibits pyruvate dehydrogenase activity, and thereby regulates metabolite flux through the tricarboxylic acid cycle, down-regulates aerobic respiration and inhibits the formation of acetyl-coenzyme A from pyruvate. Inhibition of pyruvate dehydrogenase decreases glucose utilization and increases fat metabolism in response to prolonged fasting and starvation. Plays an important role in maintaining normal blood glucose levels under starvation, and is involved in the insulin signaling cascade. Via its regulation of pyruvate dehydrogenase activity, plays an important role in maintaining normal blood pH and in preventing the accumulation of ketone bodies under starvation. In the fed state, mediates cellular responses to glucose levels and to a high-fat diet. Regulates both fatty acid oxidation and de novo fatty acid biosynthesis. Plays a role in the generation of reactive oxygen species. Protects detached epithelial cells against anoikis. Plays a role in cell proliferation via its role in regulating carbohydrate and fatty acid metabolism. This is [Pyruvate dehydrogenase (acetyl-transferring)] kinase isozyme 4, mitochondrial (PDK4) from Rhinolophus ferrumequinum (Greater horseshoe bat).